Here is a 226-residue protein sequence, read N- to C-terminus: Ribonuclease 3 (226 aa).

The region spanning 7–129 (LPRLCRTLSY…IIGAVYLDSD (123 aa)) is the RNase III domain. Position 42 (Glu-42) interacts with Mg(2+). Asp-46 is an active-site residue. Asp-115 and Glu-118 together coordinate Mg(2+). Residue Glu-118 is part of the active site. The region spanning 156 to 226 (DAKTLLQEHL…AAQVLELLKK (71 aa)) is the DRBM domain.

This sequence belongs to the ribonuclease III family. In terms of assembly, homodimer. Requires Mg(2+) as cofactor.

The protein localises to the cytoplasm. The catalysed reaction is Endonucleolytic cleavage to 5'-phosphomonoester.. Digests double-stranded RNA. Involved in the processing of primary rRNA transcript to yield the immediate precursors to the large and small rRNAs (23S and 16S). Processes some mRNAs, and tRNAs when they are encoded in the rRNA operon. Processes pre-crRNA and tracrRNA of type II CRISPR loci if present in the organism. The protein is Ribonuclease 3 of Shewanella baltica (strain OS223).